A 305-amino-acid chain; its full sequence is Tyrosine recombinase XerC (305 aa).

A Core-binding (CB) domain is found at M1–V93. Positions R114–D294 constitute a Tyr recombinase domain. Residues R155, K179, H246, R249, and H272 contribute to the active site. The O-(3'-phospho-DNA)-tyrosine intermediate role is filled by Y281.

The protein belongs to the 'phage' integrase family. XerC subfamily. Forms a cyclic heterotetrameric complex composed of two molecules of XerC and two molecules of XerD.

It is found in the cytoplasm. Its function is as follows. Site-specific tyrosine recombinase, which acts by catalyzing the cutting and rejoining of the recombining DNA molecules. The XerC-XerD complex is essential to convert dimers of the bacterial chromosome into monomers to permit their segregation at cell division. It also contributes to the segregational stability of plasmids. In Neisseria meningitidis serogroup C (strain 053442), this protein is Tyrosine recombinase XerC.